The sequence spans 324 residues: Glyoxylate/hydroxypyruvate reductase B (324 aa).

Catalysis depends on residues Arg-237 and Glu-266. Catalysis depends on His-285, which acts as the Proton donor.

The protein belongs to the D-isomer specific 2-hydroxyacid dehydrogenase family. GhrB subfamily. Homodimer.

The protein localises to the cytoplasm. The enzyme catalyses glycolate + NADP(+) = glyoxylate + NADPH + H(+). The catalysed reaction is (R)-glycerate + NAD(+) = 3-hydroxypyruvate + NADH + H(+). It carries out the reaction (R)-glycerate + NADP(+) = 3-hydroxypyruvate + NADPH + H(+). In terms of biological role, catalyzes the NADPH-dependent reduction of glyoxylate and hydroxypyruvate into glycolate and glycerate, respectively. This Salmonella schwarzengrund (strain CVM19633) protein is Glyoxylate/hydroxypyruvate reductase B.